We begin with the raw amino-acid sequence, 362 residues long: Acetylglutamate kinase (362 aa).

The span at 1 to 11 (MNAPTRTPPPS) shows a compositional bias: pro residues. Residues 1–42 (MNAPTRTPPPSNGGHGSTGSTGSTGDAAPGGGTGRGPAATAR) form a disordered region. Substrate contacts are provided by residues 106-107 (GG), R128, and N227. Positions 329–362 (MAESGTSPEPGTPPAPAARPAGIVPAGEPTGGTP) are disordered. Over residues 346 to 355 (ARPAGIVPAG) the composition is skewed to low complexity.

The protein belongs to the acetylglutamate kinase family. ArgB subfamily.

The protein localises to the cytoplasm. It carries out the reaction N-acetyl-L-glutamate + ATP = N-acetyl-L-glutamyl 5-phosphate + ADP. It participates in amino-acid biosynthesis; L-arginine biosynthesis; N(2)-acetyl-L-ornithine from L-glutamate: step 2/4. Its function is as follows. Catalyzes the ATP-dependent phosphorylation of N-acetyl-L-glutamate. The chain is Acetylglutamate kinase from Frankia casuarinae (strain DSM 45818 / CECT 9043 / HFP020203 / CcI3).